The primary structure comprises 195 residues: dITP/XTP pyrophosphatase (195 aa).

A substrate-binding site is contributed by Thr-8–Lys-13. Mg(2+) contacts are provided by Glu-39 and Asp-68. Asp-68 acts as the Proton acceptor in catalysis. Substrate contacts are provided by residues Ser-69, Phe-149–Asp-152, Lys-172, and His-177–Arg-178.

The protein belongs to the HAM1 NTPase family. In terms of assembly, homodimer. It depends on Mg(2+) as a cofactor.

It carries out the reaction XTP + H2O = XMP + diphosphate + H(+). The enzyme catalyses dITP + H2O = dIMP + diphosphate + H(+). It catalyses the reaction ITP + H2O = IMP + diphosphate + H(+). Pyrophosphatase that catalyzes the hydrolysis of nucleoside triphosphates to their monophosphate derivatives, with a high preference for the non-canonical purine nucleotides XTP (xanthosine triphosphate), dITP (deoxyinosine triphosphate) and ITP. Seems to function as a house-cleaning enzyme that removes non-canonical purine nucleotides from the nucleotide pool, thus preventing their incorporation into DNA/RNA and avoiding chromosomal lesions. The polypeptide is dITP/XTP pyrophosphatase (Staphylococcus epidermidis (strain ATCC 12228 / FDA PCI 1200)).